The sequence spans 185 residues: Elongation factor P (185 aa).

This sequence belongs to the elongation factor P family.

Its subcellular location is the cytoplasm. Its pathway is protein biosynthesis; polypeptide chain elongation. In terms of biological role, involved in peptide bond synthesis. Stimulates efficient translation and peptide-bond synthesis on native or reconstituted 70S ribosomes in vitro. Probably functions indirectly by altering the affinity of the ribosome for aminoacyl-tRNA, thus increasing their reactivity as acceptors for peptidyl transferase. This chain is Elongation factor P, found in Mesoplasma florum (strain ATCC 33453 / NBRC 100688 / NCTC 11704 / L1) (Acholeplasma florum).